Consider the following 423-residue polypeptide: Mannose-6-phosphate isomerase (423 aa).

Ala-2 is subject to N-acetylalanine. 2 positions are modified to phosphoserine: Ser-102 and Ser-108. Zn(2+) is bound by residues Gln-110, His-112, Glu-137, and His-276. Arg-295 is an active-site residue.

Belongs to the mannose-6-phosphate isomerase type 1 family. Zn(2+) serves as cofactor.

The protein resides in the cytoplasm. The enzyme catalyses D-mannose 6-phosphate = D-fructose 6-phosphate. It participates in nucleotide-sugar biosynthesis; GDP-alpha-D-mannose biosynthesis; alpha-D-mannose 1-phosphate from D-fructose 6-phosphate: step 1/2. Isomerase that catalyzes the interconversion of fructose-6-P and mannose-6-P and has a critical role in the supply of D-mannose derivatives required for many eukaryotic glycosylation reactions. In Rattus norvegicus (Rat), this protein is Mannose-6-phosphate isomerase.